A 573-amino-acid chain; its full sequence is DNA ligase (573 aa).

E248 contacts ATP. The N6-AMP-lysine intermediate role is filled by K250. ATP contacts are provided by R255, R270, E299, F340, R432, and K438.

This sequence belongs to the ATP-dependent DNA ligase family. The cofactor is Mg(2+).

The enzyme catalyses ATP + (deoxyribonucleotide)n-3'-hydroxyl + 5'-phospho-(deoxyribonucleotide)m = (deoxyribonucleotide)n+m + AMP + diphosphate.. Its function is as follows. DNA ligase that seals nicks in double-stranded DNA during DNA replication, DNA recombination and DNA repair. This is DNA ligase from Methanocaldococcus jannaschii (strain ATCC 43067 / DSM 2661 / JAL-1 / JCM 10045 / NBRC 100440) (Methanococcus jannaschii).